Consider the following 92-residue polypeptide: MSGITRHSQPSLRAGVRLQHDRARDQWVLLAPERVVELDDIALVVAQRYDGTRSLAQIAQELAAEFDADAAQIEADVIELTDTLHQKRLLRL.

It belongs to the PqqD family. Monomer. Interacts with PqqE.

It participates in cofactor biosynthesis; pyrroloquinoline quinone biosynthesis. Functionally, functions as a PqqA binding protein and presents PqqA to PqqE, in the pyrroloquinoline quinone (PQQ) biosynthetic pathway. This chain is PqqA binding protein, found in Xanthomonas euvesicatoria pv. vesicatoria (strain 85-10) (Xanthomonas campestris pv. vesicatoria).